The primary structure comprises 199 residues: Thymidine kinase (199 aa).

ATP contacts are provided by residues G15 to S22 and D88 to Q91. E89 (proton acceptor) is an active-site residue. The Zn(2+) site is built by C145, C148, C183, and H186.

This sequence belongs to the thymidine kinase family. As to quaternary structure, homotetramer.

Its subcellular location is the cytoplasm. The catalysed reaction is thymidine + ATP = dTMP + ADP + H(+). The protein is Thymidine kinase of Staphylococcus saprophyticus subsp. saprophyticus (strain ATCC 15305 / DSM 20229 / NCIMB 8711 / NCTC 7292 / S-41).